The following is a 470-amino-acid chain: Ribulose bisphosphate carboxylase large chain (470 aa).

Residues asparagine 115 and threonine 165 each contribute to the substrate site. Lysine 167 (proton acceptor) is an active-site residue. Lysine 169 provides a ligand contact to substrate. Mg(2+) contacts are provided by lysine 193, aspartate 195, and glutamate 196. The residue at position 193 (lysine 193) is an N6-carboxylysine. Histidine 286 functions as the Proton acceptor in the catalytic mechanism. The substrate site is built by arginine 287, histidine 319, and serine 371.

The protein belongs to the RuBisCO large chain family. Type I subfamily. In terms of assembly, heterohexadecamer of 8 large chains and 8 small chains. Mg(2+) is required as a cofactor.

It localises to the carboxysome. It catalyses the reaction 2 (2R)-3-phosphoglycerate + 2 H(+) = D-ribulose 1,5-bisphosphate + CO2 + H2O. It carries out the reaction D-ribulose 1,5-bisphosphate + O2 = 2-phosphoglycolate + (2R)-3-phosphoglycerate + 2 H(+). Its function is as follows. RuBisCO catalyzes two reactions: the carboxylation of D-ribulose 1,5-bisphosphate, the primary event in carbon dioxide fixation, as well as the oxidative fragmentation of the pentose substrate in the photorespiration process. Both reactions occur simultaneously and in competition at the same active site. The sequence is that of Ribulose bisphosphate carboxylase large chain from Prochlorococcus marinus (strain NATL1A).